The following is a 696-amino-acid chain: Elongation factor G (696 aa).

The 283-residue stretch at 8-290 folds into the tr-type G domain; that stretch reads ERYRNIGISA…KVIELMPAPT (283 aa). GTP is bound by residues 17 to 24, 88 to 92, and 142 to 145; these read AHIDAGKT, DTPGH, and NKMD.

This sequence belongs to the TRAFAC class translation factor GTPase superfamily. Classic translation factor GTPase family. EF-G/EF-2 subfamily.

It is found in the cytoplasm. In terms of biological role, catalyzes the GTP-dependent ribosomal translocation step during translation elongation. During this step, the ribosome changes from the pre-translocational (PRE) to the post-translocational (POST) state as the newly formed A-site-bound peptidyl-tRNA and P-site-bound deacylated tRNA move to the P and E sites, respectively. Catalyzes the coordinated movement of the two tRNA molecules, the mRNA and conformational changes in the ribosome. The polypeptide is Elongation factor G (Thiobacillus denitrificans (strain ATCC 25259 / T1)).